The sequence spans 250 residues: UPF0494 membrane protein PB2B2.07c (250 aa).

3 helical membrane-spanning segments follow: residues 98–118, 144–164, and 179–199; these read WPLLIIWCILIVFAIDKNFEV, IAIYICLFILLLLGLICMFPL, and MIIAVLGAALGMIIAALGATI.

It belongs to the UPF0494 family.

It localises to the cytoplasm. Its subcellular location is the endoplasmic reticulum. The protein resides in the golgi apparatus. It is found in the membrane. In Schizosaccharomyces pombe (strain 972 / ATCC 24843) (Fission yeast), this protein is UPF0494 membrane protein PB2B2.07c.